A 218-amino-acid chain; its full sequence is Ribose-5-phosphate isomerase A (218 aa).

Substrate-binding positions include 28–31, 81–84, and 94–97; these read TGST, DGAD, and KGGG. Glutamate 103 (proton acceptor) is an active-site residue. Lysine 121 contributes to the substrate binding site.

Belongs to the ribose 5-phosphate isomerase family. Homodimer.

It carries out the reaction aldehydo-D-ribose 5-phosphate = D-ribulose 5-phosphate. It participates in carbohydrate degradation; pentose phosphate pathway; D-ribose 5-phosphate from D-ribulose 5-phosphate (non-oxidative stage): step 1/1. Its function is as follows. Catalyzes the reversible conversion of ribose-5-phosphate to ribulose 5-phosphate. This is Ribose-5-phosphate isomerase A from Pseudoalteromonas atlantica (strain T6c / ATCC BAA-1087).